A 2290-amino-acid polypeptide reads, in one-letter code: Protein Ycf2 (2290 aa).

An ATP-binding site is contributed by 1644 to 1651 (GSIGTGRS).

This sequence belongs to the Ycf2 family.

It localises to the plastid. Its subcellular location is the chloroplast stroma. Its function is as follows. Probable ATPase of unknown function. Its presence in a non-photosynthetic plant (Epifagus virginiana) and experiments in tobacco indicate that it has an essential function which is probably not related to photosynthesis. This is Protein Ycf2 from Barbarea verna (Land cress).